A 341-amino-acid chain; its full sequence is Phosphate acyltransferase (341 aa).

The protein belongs to the PlsX family. In terms of assembly, homodimer. Probably interacts with PlsY.

The protein localises to the cytoplasm. The enzyme catalyses a fatty acyl-[ACP] + phosphate = an acyl phosphate + holo-[ACP]. It functions in the pathway lipid metabolism; phospholipid metabolism. Catalyzes the reversible formation of acyl-phosphate (acyl-PO(4)) from acyl-[acyl-carrier-protein] (acyl-ACP). This enzyme utilizes acyl-ACP as fatty acyl donor, but not acyl-CoA. This chain is Phosphate acyltransferase, found in Photobacterium profundum (strain SS9).